The chain runs to 97 residues: Small ribosomal subunit protein bS6 (97 aa).

It belongs to the bacterial ribosomal protein bS6 family.

Its function is as follows. Binds together with bS18 to 16S ribosomal RNA. The sequence is that of Small ribosomal subunit protein bS6 from Listeria innocua serovar 6a (strain ATCC BAA-680 / CLIP 11262).